The primary structure comprises 255 residues: uncharacterized protein (255 aa).

Positions 13, 37, 55, 81, 148, 152, 180, and 182 each coordinate NADP(+). Tyr148 serves as the catalytic Proton donor. Lys152 (lowers pKa of active site Tyr) is an active-site residue.

The protein belongs to the short-chain dehydrogenases/reductases (SDR) family.

In terms of biological role, involved in osmoadaptation. This is an uncharacterized protein from Emericella nidulans (strain FGSC A4 / ATCC 38163 / CBS 112.46 / NRRL 194 / M139) (Aspergillus nidulans).